A 240-amino-acid polypeptide reads, in one-letter code: Uridylate kinase (240 aa).

Residue 12-15 (KLSG) coordinates ATP. The tract at residues 20–25 (GKQGFG) is involved in allosteric activation by GTP. Gly-54 contributes to the UMP binding site. Positions 55 and 59 each coordinate ATP. Residues Asp-74 and 135-142 (TGNPYFST) each bind UMP. ATP-binding residues include Asn-163, Tyr-169, and Asp-172.

This sequence belongs to the UMP kinase family. In terms of assembly, homohexamer.

Its subcellular location is the cytoplasm. It catalyses the reaction UMP + ATP = UDP + ADP. The protein operates within pyrimidine metabolism; CTP biosynthesis via de novo pathway; UDP from UMP (UMPK route): step 1/1. With respect to regulation, allosterically activated by GTP. Inhibited by UTP. Functionally, catalyzes the reversible phosphorylation of UMP to UDP. The protein is Uridylate kinase of Geobacillus kaustophilus (strain HTA426).